The following is a 277-amino-acid chain: Putative hydroxypyruvate isomerase (277 aa).

Catalysis depends on proton donor/acceptor residues Glu150 and Glu249.

This sequence belongs to the hyi family.

It carries out the reaction 3-hydroxypyruvate = 2-hydroxy-3-oxopropanoate. Functionally, catalyzes the reversible isomerization between hydroxypyruvate and 2-hydroxy-3-oxopropanoate (also termed tartronate semialdehyde). This chain is Putative hydroxypyruvate isomerase (HYI), found in Homo sapiens (Human).